The primary structure comprises 200 residues: uncharacterized protein (200 aa).

The protein belongs to the HAD-like hydrolase superfamily. CbbY/CbbZ/Gph/YieH family.

This is an uncharacterized protein from Haemophilus influenzae (strain ATCC 51907 / DSM 11121 / KW20 / Rd).